Consider the following 185-residue polypeptide: Translation initiation factor IF-3 (185 aa).

Belongs to the IF-3 family. As to quaternary structure, monomer.

The protein resides in the cytoplasm. Functionally, IF-3 binds to the 30S ribosomal subunit and shifts the equilibrium between 70S ribosomes and their 50S and 30S subunits in favor of the free subunits, thus enhancing the availability of 30S subunits on which protein synthesis initiation begins. The chain is Translation initiation factor IF-3 from Rickettsia typhi (strain ATCC VR-144 / Wilmington).